The primary structure comprises 296 residues: Formylmethanofuran--tetrahydromethanopterin formyltransferase (296 aa).

It belongs to the FTR family. In terms of assembly, homotetramer composed of two dimers. Dimerization is sufficient for enzyme activity, but tetramerization is required for high thermostability.

It localises to the cytoplasm. It catalyses the reaction N-formylmethanofuran + 5,6,7,8-tetrahydromethanopterin + H(+) = N(5)-formyl-5,6,7,8-tetrahydromethanopterin + methanofuran. The protein operates within one-carbon metabolism; methanogenesis from CO(2); 5,10-methenyl-5,6,7,8-tetrahydromethanopterin from CO(2): step 2/3. Its activity is regulated as follows. Requires high salt concentrations for activity and thermostability; 1.5-1.8 M KH(2)PO(4) stimulates activity while stabilizing the enzyme. In terms of biological role, catalyzes the reversible transfer of a formyl group from formylmethanofuran (formyl-MFR) to tetrahydromethanopterin (H(4)MPT) to produce 5-formyl tetrahydromethanopterin (5-formyl-H(4)MPT) and methanofuran (MFR). Acts via a ternary-complex mechanism. Uses N-furfurylformamide much less efficiently, does not use N-methylformamide or formamide. Protein overexpressed in E.coli has very similar properties to enzyme purified from M.kandleri. This is Formylmethanofuran--tetrahydromethanopterin formyltransferase from Methanopyrus kandleri (strain AV19 / DSM 6324 / JCM 9639 / NBRC 100938).